The following is a 282-amino-acid chain: Polyamine aminopropyltransferase (282 aa).

Residues Ile-11–Lys-239 enclose the PABS domain. Gln-36 is an S-methyl-5'-thioadenosine binding site. Spermidine-binding residues include His-67 and Asp-91. S-methyl-5'-thioadenosine is bound by residues Glu-111 and Asp-142–Gly-143. Asp-160 functions as the Proton acceptor in the catalytic mechanism. Residue Asp-160–Asp-163 coordinates spermidine. Pro-167 serves as a coordination point for S-methyl-5'-thioadenosine.

Belongs to the spermidine/spermine synthase family. As to quaternary structure, homodimer or homotetramer.

The protein resides in the cytoplasm. It carries out the reaction S-adenosyl 3-(methylsulfanyl)propylamine + putrescine = S-methyl-5'-thioadenosine + spermidine + H(+). It participates in amine and polyamine biosynthesis; spermidine biosynthesis; spermidine from putrescine: step 1/1. Catalyzes the irreversible transfer of a propylamine group from the amino donor S-adenosylmethioninamine (decarboxy-AdoMet) to putrescine (1,4-diaminobutane) to yield spermidine. This chain is Polyamine aminopropyltransferase, found in Thermococcus onnurineus (strain NA1).